We begin with the raw amino-acid sequence, 1190 residues long: DNA-directed RNA polymerase subunit beta (1190 aa).

Belongs to the RNA polymerase beta chain family. The RNAP catalytic core consists of 2 alpha, 1 beta, 1 beta' and 1 omega subunit. When a sigma factor is associated with the core the holoenzyme is formed, which can initiate transcription.

It carries out the reaction RNA(n) + a ribonucleoside 5'-triphosphate = RNA(n+1) + diphosphate. Its function is as follows. DNA-dependent RNA polymerase catalyzes the transcription of DNA into RNA using the four ribonucleoside triphosphates as substrates. The protein is DNA-directed RNA polymerase subunit beta of Streptococcus suis (strain 98HAH33).